The following is a 511-amino-acid chain: Maturase K (511 aa).

This sequence belongs to the intron maturase 2 family. MatK subfamily.

It localises to the plastid. It is found in the chloroplast. Its function is as follows. Usually encoded in the trnK tRNA gene intron. Probably assists in splicing its own and other chloroplast group II introns. This Bromus inermis (Smooth brome grass) protein is Maturase K.